The primary structure comprises 169 residues: Translationally-controlled tumor protein homolog (169 aa).

The TCTP domain occupies 1–169 (MLIYKDILTG…WKHGLEEMKV (169 aa)).

This sequence belongs to the TCTP family.

Its subcellular location is the cytoplasm. It is found in the cytoskeleton. Its function is as follows. Involved in protein synthesis. Involved in microtubule stabilization. This chain is Translationally-controlled tumor protein homolog, found in Alternaria alternata (Alternaria rot fungus).